The sequence spans 352 residues: 3-isopropylmalate dehydrogenase (352 aa).

Position 76-89 (76-89) interacts with NAD(+); it reads GPKWENLPHEHKPE. Substrate is bound by residues R96, R106, R134, and D219. The Mg(2+) site is built by D219, D243, and D247. 276–288 lines the NAD(+) pocket; it reads GSAPDIAGQNKAN.

Belongs to the isocitrate and isopropylmalate dehydrogenases family. LeuB type 1 subfamily. As to quaternary structure, homodimer. Mg(2+) serves as cofactor. The cofactor is Mn(2+).

The protein localises to the cytoplasm. It catalyses the reaction (2R,3S)-3-isopropylmalate + NAD(+) = 4-methyl-2-oxopentanoate + CO2 + NADH. It participates in amino-acid biosynthesis; L-leucine biosynthesis; L-leucine from 3-methyl-2-oxobutanoate: step 3/4. In terms of biological role, catalyzes the oxidation of 3-carboxy-2-hydroxy-4-methylpentanoate (3-isopropylmalate) to 3-carboxy-4-methyl-2-oxopentanoate. The product decarboxylates to 4-methyl-2 oxopentanoate. This Chlorobium chlorochromatii (strain CaD3) protein is 3-isopropylmalate dehydrogenase.